A 416-amino-acid chain; its full sequence is Probable protein phosphatase 2C 75 (416 aa).

2 disordered regions span residues 1 to 20 and 32 to 51; these read MTEIYRTISTGRGDDVSPTK and RRQAAVFGEPSSSRNRDRTD. Residues 108 to 411 form the PPM-type phosphatase domain; that stretch reads LYGIVSVMGR…DNISVVVIDL (304 aa). The Mn(2+) site is built by aspartate 149, glycine 150, aspartate 337, and aspartate 402.

The protein belongs to the PP2C family. Requires Mg(2+) as cofactor. Mn(2+) serves as cofactor.

It carries out the reaction O-phospho-L-seryl-[protein] + H2O = L-seryl-[protein] + phosphate. The catalysed reaction is O-phospho-L-threonyl-[protein] + H2O = L-threonyl-[protein] + phosphate. In terms of biological role, negative regulator of abscisic acid (ABA) responses during seed germination. This Arabidopsis thaliana (Mouse-ear cress) protein is Probable protein phosphatase 2C 75 (AHG1).